Consider the following 113-residue polypeptide: Large ribosomal subunit protein uL22 (113 aa).

It belongs to the universal ribosomal protein uL22 family. In terms of assembly, part of the 50S ribosomal subunit.

This protein binds specifically to 23S rRNA; its binding is stimulated by other ribosomal proteins, e.g. L4, L17, and L20. It is important during the early stages of 50S assembly. It makes multiple contacts with different domains of the 23S rRNA in the assembled 50S subunit and ribosome. Its function is as follows. The globular domain of the protein is located near the polypeptide exit tunnel on the outside of the subunit, while an extended beta-hairpin is found that lines the wall of the exit tunnel in the center of the 70S ribosome. In Bacillus pumilus (strain SAFR-032), this protein is Large ribosomal subunit protein uL22.